A 352-amino-acid chain; its full sequence is 4-hydroxy-2-oxovalerate aldolase (352 aa).

The 253-residue stretch at 13 to 265 folds into the Pyruvate carboxyltransferase domain; it reads VRLTDTSLRD…KTGIDFFDIA (253 aa). 21-22 lines the substrate pocket; the sequence is RD. Aspartate 22 provides a ligand contact to Mn(2+). Catalysis depends on histidine 25, which acts as the Proton acceptor. Substrate-binding residues include serine 175 and histidine 204. Mn(2+)-binding residues include histidine 204 and histidine 206. Tyrosine 295 is a substrate binding site.

Belongs to the 4-hydroxy-2-oxovalerate aldolase family.

It carries out the reaction (S)-4-hydroxy-2-oxopentanoate = acetaldehyde + pyruvate. In Mycolicibacterium paratuberculosis (strain ATCC BAA-968 / K-10) (Mycobacterium paratuberculosis), this protein is 4-hydroxy-2-oxovalerate aldolase.